The sequence spans 382 residues: Galactokinase (382 aa).

34-37 serves as a coordination point for substrate; that stretch reads EHTD. Residue 124–130 coordinates ATP; it reads GAGLSSS. Mg(2+) contacts are provided by serine 130 and glutamate 162. Catalysis depends on aspartate 174, which acts as the Proton acceptor. Tyrosine 223 is a binding site for substrate.

This sequence belongs to the GHMP kinase family. GalK subfamily.

The protein resides in the cytoplasm. It catalyses the reaction alpha-D-galactose + ATP = alpha-D-galactose 1-phosphate + ADP + H(+). The protein operates within carbohydrate metabolism; galactose metabolism. Its function is as follows. Catalyzes the transfer of the gamma-phosphate of ATP to D-galactose to form alpha-D-galactose-1-phosphate (Gal-1-P). The polypeptide is Galactokinase (Enterobacter sp. (strain 638)).